The primary structure comprises 494 residues: Sucrose-6-phosphate hydrolase (494 aa).

Substrate is bound by residues 45 to 48, Q64, 107 to 108, 168 to 169, and E223; these read LLND, YS, and RD. Residue D48 is part of the active site.

The protein belongs to the glycosyl hydrolase 32 family.

It carries out the reaction Hydrolysis of terminal non-reducing beta-D-fructofuranoside residues in beta-D-fructofuranosides.. Its pathway is glycan biosynthesis; sucrose metabolism. The sequence is that of Sucrose-6-phosphate hydrolase (scrB) from Staphylococcus xylosus.